The chain runs to 447 residues: 3-phosphoshikimate 1-carboxyvinyltransferase (447 aa).

3-phosphoshikimate is bound by residues K25, S26, and R30. Phosphoenolpyruvate is bound at residue K25. 2 residues coordinate phosphoenolpyruvate: G96 and R124. Positions 171, 172, 173, 203, 325, and 352 each coordinate 3-phosphoshikimate. Q173 contributes to the phosphoenolpyruvate binding site. The active-site Proton acceptor is the D325. Residues R356, R400, and K425 each coordinate phosphoenolpyruvate.

The protein belongs to the EPSP synthase family. In terms of assembly, monomer.

The protein localises to the cytoplasm. The enzyme catalyses 3-phosphoshikimate + phosphoenolpyruvate = 5-O-(1-carboxyvinyl)-3-phosphoshikimate + phosphate. The protein operates within metabolic intermediate biosynthesis; chorismate biosynthesis; chorismate from D-erythrose 4-phosphate and phosphoenolpyruvate: step 6/7. Functionally, catalyzes the transfer of the enolpyruvyl moiety of phosphoenolpyruvate (PEP) to the 5-hydroxyl of shikimate-3-phosphate (S3P) to produce enolpyruvyl shikimate-3-phosphate and inorganic phosphate. This chain is 3-phosphoshikimate 1-carboxyvinyltransferase, found in Bordetella petrii (strain ATCC BAA-461 / DSM 12804 / CCUG 43448).